The sequence spans 307 residues: MRKIILCSPRGFCAGVIRAIQTVEVALEKWGRPIYVKHEIVHNRHVVDKLREKGAIFIEDLQEVPRNSRVIFSAHGVPPSVREEAEERGLIAIDATCGLVTKVHSAVKMYAKKGYHIILIGKRKHVEIIGIRGEAPDQITVVENIAEVEALPFSAQDPLFYVTQTTLSMDDAADIVAALKARYPRIFTLPSSSICYATQNRQGALRNILPQVDFVYVIGDTQSSNSNRLREVAERRGVTARLVNHPDEVTEEILQYSGNIGITAGASTPEDVVQACLMKLQELIPDLSIEMDLFVEEDTVFQLPKEL.

Position 13 (Cys-13) interacts with [4Fe-4S] cluster. 2 residues coordinate (2E)-4-hydroxy-3-methylbut-2-enyl diphosphate: His-42 and His-75. Dimethylallyl diphosphate is bound by residues His-42 and His-75. Isopentenyl diphosphate contacts are provided by His-42 and His-75. Cys-97 is a [4Fe-4S] cluster binding site. Position 125 (His-125) interacts with (2E)-4-hydroxy-3-methylbut-2-enyl diphosphate. Residue His-125 participates in dimethylallyl diphosphate binding. His-125 lines the isopentenyl diphosphate pocket. Residue Glu-127 is the Proton donor of the active site. Thr-165 lines the (2E)-4-hydroxy-3-methylbut-2-enyl diphosphate pocket. Residue Cys-195 coordinates [4Fe-4S] cluster. (2E)-4-hydroxy-3-methylbut-2-enyl diphosphate is bound by residues Ser-223, Ser-224, Asn-225, and Ser-267. Residues Ser-223, Ser-224, Asn-225, and Ser-267 each coordinate dimethylallyl diphosphate. Ser-223, Ser-224, Asn-225, and Ser-267 together coordinate isopentenyl diphosphate.

This sequence belongs to the IspH family. Requires [4Fe-4S] cluster as cofactor.

It carries out the reaction isopentenyl diphosphate + 2 oxidized [2Fe-2S]-[ferredoxin] + H2O = (2E)-4-hydroxy-3-methylbut-2-enyl diphosphate + 2 reduced [2Fe-2S]-[ferredoxin] + 2 H(+). It catalyses the reaction dimethylallyl diphosphate + 2 oxidized [2Fe-2S]-[ferredoxin] + H2O = (2E)-4-hydroxy-3-methylbut-2-enyl diphosphate + 2 reduced [2Fe-2S]-[ferredoxin] + 2 H(+). It participates in isoprenoid biosynthesis; dimethylallyl diphosphate biosynthesis; dimethylallyl diphosphate from (2E)-4-hydroxy-3-methylbutenyl diphosphate: step 1/1. Its pathway is isoprenoid biosynthesis; isopentenyl diphosphate biosynthesis via DXP pathway; isopentenyl diphosphate from 1-deoxy-D-xylulose 5-phosphate: step 6/6. Functionally, catalyzes the conversion of 1-hydroxy-2-methyl-2-(E)-butenyl 4-diphosphate (HMBPP) into a mixture of isopentenyl diphosphate (IPP) and dimethylallyl diphosphate (DMAPP). Acts in the terminal step of the DOXP/MEP pathway for isoprenoid precursor biosynthesis. The polypeptide is 4-hydroxy-3-methylbut-2-enyl diphosphate reductase (Chlamydia trachomatis serovar D (strain ATCC VR-885 / DSM 19411 / UW-3/Cx)).